The following is a 121-amino-acid chain: Basic phospholipase A2 F17 (121 aa).

Intrachain disulfides connect cysteine 25–cysteine 114, cysteine 27–cysteine 43, cysteine 42–cysteine 94, cysteine 48–cysteine 121, cysteine 49–cysteine 87, cysteine 56–cysteine 80, and cysteine 74–cysteine 85. Residues tyrosine 26, glycine 28, and glycine 30 each coordinate Ca(2+). The active site involves histidine 46. Aspartate 47 contacts Ca(2+). The active site involves aspartate 88.

The protein belongs to the phospholipase A2 family. Group II subfamily. D49 sub-subfamily. When this protein is associated with crotapotin (F5 or F7), it forms the crotoxin protein. Ca(2+) serves as cofactor. In terms of tissue distribution, expressed by the venom gland.

It localises to the secreted. It catalyses the reaction a 1,2-diacyl-sn-glycero-3-phosphocholine + H2O = a 1-acyl-sn-glycero-3-phosphocholine + a fatty acid + H(+). Its activity is regulated as follows. Activated by heparin. Inhibited by its chaperone crotapotin. In terms of biological role, snake venom phospholipase A2 (PLA2) that has anticoagulant activity and inhibits bactericial growth of the Gram-negative bacteria Xanthomonas axonopodis pv. passiflorae (in monomeric form). PLA2 catalyzes the calcium-dependent hydrolysis of the 2-acyl groups in 3-sn-phosphoglycerides. This Crotalus durissus terrificus (South American rattlesnake) protein is Basic phospholipase A2 F17.